The chain runs to 571 residues: Phosphatidylinositol-3,5-bisphosphate 3-phosphatase MTMR2 (571 aa).

Residues 1-67 (MEEPPLLPGE…GVINRVEKIG (67 aa)) form the GRAM domain. One can recognise a Myotubularin phosphatase domain in the interval 133–508 (GWKVYDPIWE…RHLELWVGYY (376 aa)). Residues Asn-258, Asn-283, and Ile-284 each contribute to the a 1,2-diacyl-sn-glycero-3-phospho-(1D-myo-inositol-3,5-bisphosphate) site. Residues Asn-258, Asn-283, and Ile-284 each coordinate a 1,2-diacyl-sn-glycero-3-phospho-(1D-myo-inositol-3-phosphate). The active-site Phosphocysteine intermediate is the Cys-345. Positions 346, 347, 348, 349, 350, 351, 387, and 391 each coordinate a 1,2-diacyl-sn-glycero-3-phospho-(1D-myo-inositol-3,5-bisphosphate). Ser-346, Asp-347, Gly-348, Trp-349, Asp-350, and Arg-351 together coordinate a 1,2-diacyl-sn-glycero-3-phospho-(1D-myo-inositol-3-phosphate). Arg-391 contacts a 1,2-diacyl-sn-glycero-3-phospho-(1D-myo-inositol-3-phosphate). Positions 521–553 (VHNRYKELLAKRAELQKKVEELQREITNRSTSS) form a coiled coil. The segment at 544–571 (REITNRSTSSSERAGSPAQCVTPVQTVV) is disordered.

Belongs to the protein-tyrosine phosphatase family. Non-receptor class myotubularin subfamily. As to quaternary structure, homooligomer and heterooligomer.

The protein localises to the cytoplasm. The protein resides in the early endosome membrane. It carries out the reaction a 1,2-diacyl-sn-glycero-3-phospho-(1D-myo-inositol-3,5-bisphosphate) + H2O = a 1,2-diacyl-sn-glycero-3-phospho-(1D-myo-inositol-5-phosphate) + phosphate. The catalysed reaction is a 1,2-diacyl-sn-glycero-3-phospho-(1D-myo-inositol-3-phosphate) + H2O = a 1,2-diacyl-sn-glycero-3-phospho-(1D-myo-inositol) + phosphate. It catalyses the reaction 1,2-dioctanoyl-sn-glycero-3-phospho-(1-D-myo-inositol-3-phosphate) + H2O = 1,2-dioctanoyl-sn-glycero-3-phospho-(1D-myo-inositol) + phosphate. The enzyme catalyses 1,2-dioctanoyl-sn-glycero-3-phospho-(1D-myo-inositol-3,5-bisphosphate) + H2O = 1,2-dioctanoyl-sn-glycero-3-phospho-(1D-myo-inositol-5-phosphate) + phosphate. Functionally, lipid phosphatase that specifically dephosphorylates the D-3 position of phosphatidylinositol 3-phosphate and phosphatidylinositol 3,5-bisphosphate, generating phosphatidylinositol and phosphatidylinositol 5-phosphate. Regulates the level of these phosphoinositides critical for various biological processes including autophagy initiation and autophagosome maturation. The sequence is that of Phosphatidylinositol-3,5-bisphosphate 3-phosphatase MTMR2 from Gallus gallus (Chicken).